Reading from the N-terminus, the 406-residue chain is Pyridinium-3,5-bisthiocarboxylic acid mononucleotide nickel insertion protein (406 aa).

This sequence belongs to the LarC family.

The catalysed reaction is Ni(II)-pyridinium-3,5-bisthiocarboxylate mononucleotide = pyridinium-3,5-bisthiocarboxylate mononucleotide + Ni(2+). Involved in the biosynthesis of a nickel-pincer cofactor ((SCS)Ni(II) pincer complex). Binds Ni(2+), and functions in nickel delivery to pyridinium-3,5-bisthiocarboxylic acid mononucleotide (P2TMN), to form the mature cofactor. Is thus probably required for the activation of nickel-pincer cofactor-dependent enzymes. This chain is Pyridinium-3,5-bisthiocarboxylic acid mononucleotide nickel insertion protein, found in Akkermansia muciniphila (strain ATCC BAA-835 / DSM 22959 / JCM 33894 / BCRC 81048 / CCUG 64013 / CIP 107961 / Muc).